A 129-amino-acid polypeptide reads, in one-letter code: UPF0102 protein Clim_0016 (129 aa).

It belongs to the UPF0102 family.

In Chlorobium limicola (strain DSM 245 / NBRC 103803 / 6330), this protein is UPF0102 protein Clim_0016.